The primary structure comprises 302 residues: Putative S-adenosyl-L-methionine-dependent methyltransferase MMAR_1068 (302 aa).

Residues Asp-127 and 156–157 each bind S-adenosyl-L-methionine; that span reads DL.

Belongs to the UPF0677 family.

Exhibits S-adenosyl-L-methionine-dependent methyltransferase activity. This Mycobacterium marinum (strain ATCC BAA-535 / M) protein is Putative S-adenosyl-L-methionine-dependent methyltransferase MMAR_1068.